Here is a 468-residue protein sequence, read N- to C-terminus: ATP synthase subunit beta (468 aa).

ATP is bound at residue 155–162 (GGAGVGKT).

It belongs to the ATPase alpha/beta chains family. In terms of assembly, F-type ATPases have 2 components, CF(1) - the catalytic core - and CF(0) - the membrane proton channel. CF(1) has five subunits: alpha(3), beta(3), gamma(1), delta(1), epsilon(1). CF(0) has three main subunits: a(1), b(2) and c(9-12). The alpha and beta chains form an alternating ring which encloses part of the gamma chain. CF(1) is attached to CF(0) by a central stalk formed by the gamma and epsilon chains, while a peripheral stalk is formed by the delta and b chains.

It is found in the cell membrane. The catalysed reaction is ATP + H2O + 4 H(+)(in) = ADP + phosphate + 5 H(+)(out). Functionally, produces ATP from ADP in the presence of a proton gradient across the membrane. The catalytic sites are hosted primarily by the beta subunits. The protein is ATP synthase subunit beta of Streptococcus pneumoniae (strain CGSP14).